A 1061-amino-acid chain; its full sequence is MGKGGEDCGNKQTNSSELVKSDTFPAWGKDVSECEEKFGVSREKGLSTDEVLKRHQIYGLNELEKPEGTSIFKLILEQFNDTLVRILLAAAVISFVLAFFDGDEGGEMGITAFVEPLVIFLILIVNAIVGIWQETNAEKALEALKEIQSQQATVMRDGTKVSSLPAKELVPGDIVELRVGDKVPADMRVVALISSTLRVEQGSLTGESEAVSKTTKHVDENADIQGKKCMVFAGTTVVNGNCICLVTDTGMNTEIGRVHSQIQEAAQHEEDTPLKKKLNEFGEVLTMIIGLICALVWLINVKYFLSWEYVDGWPRNFKFSFEKCTYYFEIAVALAVAAIPEGLPAVITTCLALGTRKMAQKNALVRKLPSVETLGCTTVICSDKTGTLTTNQMAVSKLVAMGSRIGTLRSFNVEGTSFDPRDGKIEDWPTGRMDANLQMIAKIAAICNDANVEKSDQQFVSRGMPTEAALKVLVEKMGFPEGLNEASSDGNVLRCCRLWSELEQRIATLEFDRDRKSMGVMVDSSSGKKLLLVKGAVENVLERSTHIQLLDGSTRELDQYSRDLILQSLHDMSLSALRCLGFAYSDVPSDFATYDGSEDHPAHQQLLNPSNYSSIESNLVFVGFVGLRDPPRKEVRQAIADCRTAGIRVMVITGDNKSTAEAICREIGVFEADEDISSRSLTGKEFMDVKDQKNHLRQTGGLLFSRAEPKHKQEIVRLLKEDGEVVAMTGDGVNDAPALKLADIGVAMGISGTEVAKEASDLVLADDNFSTIVAAVGEGRSIYNNMKAFIRYMISSNIGEVASIFLTAALGIPEGMIPVQLLWVNLVTDGPPATALGFNPPDKDIMKKPPRRSDDSLITAWILFRYMVIGLYVGVATVGVFIIWYTHNSFMGIDLSQDGHSLVSYSQLAHWGQCSSWEGFKVSPFTAGSQTFSFDSNPCDYFQQGKIKASTLSLSVLVAIEMFNSLNALSEDGSLVTMPPWVNPWLLLAMAVSFGLHFVILYVPFLAQVFGIVPLSLNEWLLVLAVSLPVILIDEVLKFVGRCTSGYRYSPRTPSAKQKEE.

The disordered stretch occupies residues 1-21 (MGKGGEDCGNKQTNSSELVKS). At 1–70 (MGKGGEDCGN…NELEKPEGTS (70 aa)) the chain is on the cytoplasmic side. A helical transmembrane segment spans residues 71 to 91 (IFKLILEQFNDTLVRILLAAA). The Lumenal segment spans residues 92–115 (VISFVLAFFDGDEGGEMGITAFVE). The chain crosses the membrane as a helical span at residues 116–135 (PLVIFLILIVNAIVGIWQET). Over 136-278 (NAEKALEALK…EEDTPLKKKL (143 aa)) the chain is Cytoplasmic. The chain crosses the membrane as a helical span at residues 279 to 298 (NEFGEVLTMIIGLICALVWL). Residues 299 to 327 (INVKYFLSWEYVDGWPRNFKFSFEKCTYY) lie on the Lumenal side of the membrane. Residues 328-345 (FEIAVALAVAAIPEGLPA) form a helical membrane-spanning segment. The Ca(2+) site is built by Val336, Ala337, Ile339, and Glu341. At 346 to 786 (VITTCLALGT…GEGRSIYNNM (441 aa)) the chain is on the cytoplasmic side. The active-site 4-aspartylphosphate intermediate is the Asp383. Positions 731 and 735 each coordinate Mg(2+). The helical transmembrane segment at 787-806 (KAFIRYMISSNIGEVASIFL) threads the bilayer. 2 residues coordinate Ca(2+): Asn797 and Glu800. The Lumenal portion of the chain corresponds to 807-816 (TAALGIPEGM). The chain crosses the membrane as a helical span at residues 817–837 (IPVQLLWVNLVTDGPPATALG). Residues Asn825, Thr828, and Asp829 each coordinate Ca(2+). The Cytoplasmic portion of the chain corresponds to 838 to 857 (FNPPDKDIMKKPPRRSDDSL). A helical transmembrane segment spans residues 858-880 (ITAWILFRYMVIGLYVGVATVGV). Over 881 to 950 (FIIWYTHNSF…YFQQGKIKAS (70 aa)) the chain is Lumenal. The chain crosses the membrane as a helical span at residues 951 to 970 (TLSLSVLVAIEMFNSLNALS). Position 961 (Glu961) interacts with Ca(2+). The Cytoplasmic portion of the chain corresponds to 971 to 983 (EDGSLVTMPPWVN). Residues 984–1002 (PWLLLAMAVSFGLHFVILY) traverse the membrane as a helical segment. Residues 1003 to 1017 (VPFLAQVFGIVPLSL) are Lumenal-facing. A helical membrane pass occupies residues 1018-1038 (NEWLLVLAVSLPVILIDEVLK). Topologically, residues 1039–1061 (FVGRCTSGYRYSPRTPSAKQKEE) are cytoplasmic.

Belongs to the cation transport ATPase (P-type) (TC 3.A.3) family. Type IIA subfamily.

It is found in the membrane. It catalyses the reaction Ca(2+)(in) + ATP + H2O = Ca(2+)(out) + ADP + phosphate + H(+). In terms of biological role, this magnesium-dependent enzyme catalyzes the hydrolysis of ATP coupled with the translocation of calcium from the cytosol to an endomembrane compartment. The sequence is that of Calcium-transporting ATPase 4, endoplasmic reticulum-type (ECA4) from Arabidopsis thaliana (Mouse-ear cress).